Here is a 315-residue protein sequence, read N- to C-terminus: Homoserine kinase (315 aa).

Residue 97–107 (PPARGLGSSAT) coordinates ATP.

The protein belongs to the GHMP kinase family. Homoserine kinase subfamily.

Its subcellular location is the cytoplasm. The enzyme catalyses L-homoserine + ATP = O-phospho-L-homoserine + ADP + H(+). Its pathway is amino-acid biosynthesis; L-threonine biosynthesis; L-threonine from L-aspartate: step 4/5. Functionally, catalyzes the ATP-dependent phosphorylation of L-homoserine to L-homoserine phosphate. This Parasynechococcus marenigrum (strain WH8102) protein is Homoserine kinase.